The sequence spans 118 residues: Basic phospholipase A2 4 (118 aa).

Disulfide bonds link C11-C71, C27-C117, C29-C45, C44-C98, C51-C91, C60-C84, and C78-C89. Y28, G30, and G32 together coordinate Ca(2+). The active site involves H48. D49 contacts Ca(2+). D92 is an active-site residue.

The protein belongs to the phospholipase A2 family. Group I subfamily. D49 sub-subfamily. In terms of assembly, monomer. Ca(2+) is required as a cofactor. Expressed by the venom gland.

It localises to the secreted. The enzyme catalyses a 1,2-diacyl-sn-glycero-3-phosphocholine + H2O = a 1-acyl-sn-glycero-3-phosphocholine + a fatty acid + H(+). In terms of biological role, PLA2 catalyzes the calcium-dependent hydrolysis of the 2-acyl groups in 3-sn-phosphoglycerides. This chain is Basic phospholipase A2 4, found in Laticauda semifasciata (Black-banded sea krait).